The following is a 314-amino-acid chain: UDP-N-acetylenolpyruvoylglucosamine reductase (314 aa).

The region spanning 27-192 is the FAD-binding PCMH-type domain; that stretch reads KIGGKARYIV…LRAVFCLKFA (166 aa). Arginine 171 is a catalytic residue. Serine 223 acts as the Proton donor in catalysis. Glutamate 293 is an active-site residue.

This sequence belongs to the MurB family. It depends on FAD as a cofactor.

Its subcellular location is the cytoplasm. The enzyme catalyses UDP-N-acetyl-alpha-D-muramate + NADP(+) = UDP-N-acetyl-3-O-(1-carboxyvinyl)-alpha-D-glucosamine + NADPH + H(+). It functions in the pathway cell wall biogenesis; peptidoglycan biosynthesis. Its function is as follows. Cell wall formation. This Caldicellulosiruptor bescii (strain ATCC BAA-1888 / DSM 6725 / KCTC 15123 / Z-1320) (Anaerocellum thermophilum) protein is UDP-N-acetylenolpyruvoylglucosamine reductase.